A 323-amino-acid polypeptide reads, in one-letter code: Probable inactive poly [ADP-ribose] polymerase SRO2 (323 aa).

In terms of domain architecture, PARP catalytic spans 31–257 (SSVSHAGSSF…FASRPSSPWV (227 aa)). The region spanning 250–321 (SRPSSPWVSF…IKNHKNRNKV (72 aa)) is the RST domain.

In terms of assembly, interacts with STO.

The protein resides in the nucleus. Probable inactive ADP-ribosyltransferase that may be involved in stress and developmental responses. This chain is Probable inactive poly [ADP-ribose] polymerase SRO2 (SRO2), found in Arabidopsis thaliana (Mouse-ear cress).